A 440-amino-acid polypeptide reads, in one-letter code: Xylose isomerase (440 aa).

Catalysis depends on residues His100 and Asp103. The Mg(2+) site is built by Glu231, Glu267, His270, Asp295, Asp306, Asp308, and Asp338.

This sequence belongs to the xylose isomerase family. In terms of assembly, homotetramer. It depends on Mg(2+) as a cofactor.

It localises to the cytoplasm. It catalyses the reaction alpha-D-xylose = alpha-D-xylulofuranose. The protein is Xylose isomerase of Burkholderia cenocepacia (strain ATCC BAA-245 / DSM 16553 / LMG 16656 / NCTC 13227 / J2315 / CF5610) (Burkholderia cepacia (strain J2315)).